Consider the following 251-residue polypeptide: Ubiquinone/menaquinone biosynthesis C-methyltransferase UbiE (251 aa).

S-adenosyl-L-methionine is bound by residues T74, D95, and N123 to A124.

This sequence belongs to the class I-like SAM-binding methyltransferase superfamily. MenG/UbiE family.

It catalyses the reaction a 2-demethylmenaquinol + S-adenosyl-L-methionine = a menaquinol + S-adenosyl-L-homocysteine + H(+). The enzyme catalyses a 2-methoxy-6-(all-trans-polyprenyl)benzene-1,4-diol + S-adenosyl-L-methionine = a 5-methoxy-2-methyl-3-(all-trans-polyprenyl)benzene-1,4-diol + S-adenosyl-L-homocysteine + H(+). It functions in the pathway quinol/quinone metabolism; menaquinone biosynthesis; menaquinol from 1,4-dihydroxy-2-naphthoate: step 2/2. It participates in cofactor biosynthesis; ubiquinone biosynthesis. Methyltransferase required for the conversion of demethylmenaquinol (DMKH2) to menaquinol (MKH2) and the conversion of 2-polyprenyl-6-methoxy-1,4-benzoquinol (DDMQH2) to 2-polyprenyl-3-methyl-6-methoxy-1,4-benzoquinol (DMQH2). The sequence is that of Ubiquinone/menaquinone biosynthesis C-methyltransferase UbiE from Erwinia tasmaniensis (strain DSM 17950 / CFBP 7177 / CIP 109463 / NCPPB 4357 / Et1/99).